The sequence spans 736 residues: MGNPENIEDAYVAVIRPKNTASLNSREYRAKSYEILLHEVPIEGQKKKRKKVLLETKLQSNSEIAQGILDYVVETTKPISPANQGIKGKRVVLMRKFPLDGEKTGREAALFIVPSVVKDNTKYAYTPGCPIFYCLQDIMRVCSESSTHFATLTARMLIALDKWLDERHAQSHFIPALFRPSPLERIKTNVINPAYAAELGQVDNSLHMGYSALEIKSKMLALEKADTCIYNPLFGSDLQYTNRVDKVVINPYFGLGAPDYSKIQIPKQEKWQRSMSSVVEDKERQWVDDFPLHRNACEGDSELLSHLLDKGLSVNQLDNDHWAPIHYACWYGKVEATRILLEKGKCNPNLLNGQLSSPLHFAAGGGHAEIVQILLTHPDIDRHITDQQGRSPLNVCEENKQNNWEEAAKLLKDAINKPYEKVRIYRMDGSYRSVELKHGNNTTAQQIMEGMRLSQETQRYFTIWICSENLSLQFKPYHKPLQQVHDWPEILAELTNLDPQRETPQLFLRRDVGLPLEVEKKIEDPLAILILFDEARYNLLKGFYTAPDAKLITLASLLLQIVYGNYESKKHKQGFLNEETLKSIVPITKLKSKAPHWINRILHEYKNLSLSEGVSKEMHHLQRMFLQNCWEIPTYGAAFFTGQIFTKASPSNHKVIPVYVGVNIKGLHLLNMETKALLISLKYCCFTWQLGDAGTCFQIHSMENKMSFIVHTKQAGLVVKLLMKLNGQLMPSERNS.

An N-terminal domain similar to Nudix hydrolase domain region spans residues 1–170; the sequence is MGNPENIEDA…DKWLDERHAQ (170 aa). Residues 172 to 195 are interaction with ITGB1BP1; the sequence is HFIPALFRPSPLERIKTNVINPAY. ANK repeat units follow at residues 287-316, 320-350, 354-384, and 388-419; these read VDDF…SVNQ, DHWA…NPNL, QLSS…DRHI, and QGRS…NKPY. Residues 420-736 form the FERM domain; the sequence is EKVRIYRMDG…GQLMPSERNS (317 aa). Positions 430 to 452 are interaction with RAP1B; sequence SYRSVELKHGNNTTAQQIMEGMR.

In terms of assembly, found in a complex, at least composed of ITGB1BP1, KRIT1 and RAP1A. Interacts (via C-terminus FERM domain) with RAP1A (active GTP-bound form preferentially); the interaction does not induce the opening conformation of KRIT1. Interacts (via N-terminus NPXY motif) with ITGB1BP1; the interaction induces the opening conformation of KRIT1 and competes with ITGB1 for ITGB1BP1 interaction. Associates (via N-terminus and C-terminus regions) with microtubules; the interaction is inhibited in presence of ITGB1BP1 and active GTP-bound RAP1A. Interacts (via FERM domain) with RAP1B. Interacts with CDH5. Interacts with RAP1A. Interacts with HEG1 and CCM2; greatly facilitates CCM2-binding to HEG1. Expressed in heart, brain, spleen, lung, thymus, kidney and testis. Isoform 2 was more frequently expressed in the thymus than isoform 1.

It localises to the cytoplasm. The protein localises to the cytoskeleton. Its subcellular location is the cell membrane. It is found in the cell junction. Component of the CCM signaling pathway which is a crucial regulator of heart and vessel formation and integrity. Negative regulator of angiogenesis. Inhibits endothelial proliferation, apoptosis, migration, lumen formation and sprouting angiogenesis in primary endothelial cells. Promotes AKT phosphorylation in a NOTCH-dependent and independent manner, and inhibits ERK1/2 phosphorylation indirectly through activation of the DELTA-NOTCH cascade. Acts in concert with CDH5 to establish and maintain correct endothelial cell polarity and vascular lumen and these effects are mediated by recruitment and activation of the Par polarity complex and RAP1B. Required for the localization of phosphorylated PRKCZ, PARD3, TIAM1 and RAP1B to the cell junction, and cell junction stabilization. Plays a role in integrin signaling via its interaction with ITGB1BP1; this prevents the interaction between ITGB1 and ITGB1BP1. Microtubule-associated protein that binds to phosphatidylinositol 4,5-bisphosphate (PIP2)-containing membranes in a GTP-bound RAP1-dependent manner. Plays an important role in the maintenance of the intracellular reactive oxygen species (ROS) homeostasis to prevent oxidative cellular damage. Regulates the homeostasis of intracellular ROS through an antioxidant pathway involving FOXO1 and SOD2. Facilitates the down-regulation of cyclin-D1 (CCND1) levels required for cell transition from proliferative growth to quiescence by preventing the accumulation of intracellular ROS through the modulation of FOXO1 and SOD2 levels. May play a role in the regulation of macroautophagy through the down-regulation of the mTOR pathway. The protein is Krev interaction trapped protein 1 (Krit1) of Mus musculus (Mouse).